The sequence spans 115 residues: Large ribosomal subunit protein bL19 (115 aa).

It belongs to the bacterial ribosomal protein bL19 family.

Its function is as follows. This protein is located at the 30S-50S ribosomal subunit interface and may play a role in the structure and function of the aminoacyl-tRNA binding site. The protein is Large ribosomal subunit protein bL19 of Citrobacter koseri (strain ATCC BAA-895 / CDC 4225-83 / SGSC4696).